The chain runs to 331 residues: 6-phosphogluconolactonase (331 aa).

The residue at position 287 (Lys287) is an N6-acetyllysine.

It belongs to the cycloisomerase 2 family.

It carries out the reaction 6-phospho-D-glucono-1,5-lactone + H2O = 6-phospho-D-gluconate + H(+). It functions in the pathway carbohydrate degradation; pentose phosphate pathway; D-ribulose 5-phosphate from D-glucose 6-phosphate (oxidative stage): step 2/3. Its function is as follows. Catalyzes the hydrolysis of 6-phosphogluconolactone to 6-phosphogluconate. This is 6-phosphogluconolactonase from Escherichia coli O157:H7.